We begin with the raw amino-acid sequence, 57 residues long: Large ribosomal subunit protein bL32 (57 aa).

This sequence belongs to the bacterial ribosomal protein bL32 family.

This Halalkalibacterium halodurans (strain ATCC BAA-125 / DSM 18197 / FERM 7344 / JCM 9153 / C-125) (Bacillus halodurans) protein is Large ribosomal subunit protein bL32 (rpmF).